The chain runs to 111 residues: Disintegrin DS-AS (111 aa).

The N-terminal stretch at 1–20 (MIQVLLVIICLAVFPYQGSC) is a signal peptide. A propeptide spanning residues 21-47 (IILESGNVNDYEIVYPKKLIVLPTGAM) is cleaved from the precursor. Residues 47–111 (MNSPHPCCDP…PDCPRNPYKD (65 aa)) form the Disintegrin domain. 4 cysteine pairs are disulfide-bonded: Cys53–Cys76, Cys67–Cys73, Cys72–Cys97, and Cys85–Cys104. Positions 89–91 (RGD) match the Cell attachment site motif.

In terms of assembly, heterodimer; disulfide-linked.

The protein resides in the secreted. In terms of biological role, inhibits ADP-induced platelet aggregation in human platelet-rich plasma (IC(50) is 8 uM). This Atheris squamigera (Variable bush viper) protein is Disintegrin DS-AS.